The sequence spans 247 residues: DNA repair protein RecO (247 aa).

Belongs to the RecO family.

Functionally, involved in DNA repair and RecF pathway recombination. In Caldanaerobacter subterraneus subsp. tengcongensis (strain DSM 15242 / JCM 11007 / NBRC 100824 / MB4) (Thermoanaerobacter tengcongensis), this protein is DNA repair protein RecO.